The primary structure comprises 410 residues: Arginine deiminase (410 aa).

The active-site Amidino-cysteine intermediate is cysteine 400.

This sequence belongs to the arginine deiminase family.

The protein localises to the cytoplasm. The enzyme catalyses L-arginine + H2O = L-citrulline + NH4(+). It participates in amino-acid degradation; L-arginine degradation via ADI pathway; carbamoyl phosphate from L-arginine: step 1/2. The polypeptide is Arginine deiminase (Streptococcus agalactiae serotype Ia (strain ATCC 27591 / A909 / CDC SS700)).